The sequence spans 274 residues: Large ribosomal subunit protein uL2 (274 aa).

The disordered stretch occupies residues 195–274; that stretch reads VGNSDHGLES…SKYIIERRKK (80 aa). Basic residues-rich tracts occupy residues 209–220 and 244–264; these read GRSRWQGRRPRN and PRSR…KKQS.

The protein belongs to the universal ribosomal protein uL2 family. In terms of assembly, part of the 50S ribosomal subunit. Forms a bridge to the 30S subunit in the 70S ribosome.

One of the primary rRNA binding proteins. Required for association of the 30S and 50S subunits to form the 70S ribosome, for tRNA binding and peptide bond formation. It has been suggested to have peptidyltransferase activity; this is somewhat controversial. Makes several contacts with the 16S rRNA in the 70S ribosome. The protein is Large ribosomal subunit protein uL2 of Bacteroides fragilis (strain ATCC 25285 / DSM 2151 / CCUG 4856 / JCM 11019 / LMG 10263 / NCTC 9343 / Onslow / VPI 2553 / EN-2).